A 639-amino-acid chain; its full sequence is UvrABC system protein C (639 aa).

Acidic residues predominate over residues 1 to 16 (MTDLPVDEPDRDDGAD). The interval 1 to 28 (MTDLPVDEPDRDDGADQPDAGADPATPR) is disordered. Over residues 17–27 (QPDAGADPATP) the composition is skewed to low complexity. Residues 42 to 120 (SSPGVYRMID…IKKLKPRYNI (79 aa)) enclose the GIY-YIG domain. Residues 230 to 265 (KALQHDLAKRMDEAAQALDYEQAAIFRDRIKALTNV) enclose the UVR domain.

Belongs to the UvrC family. In terms of assembly, interacts with UvrB in an incision complex.

The protein resides in the cytoplasm. The UvrABC repair system catalyzes the recognition and processing of DNA lesions. UvrC both incises the 5' and 3' sides of the lesion. The N-terminal half is responsible for the 3' incision and the C-terminal half is responsible for the 5' incision. This chain is UvrABC system protein C, found in Rhodospirillum rubrum (strain ATCC 11170 / ATH 1.1.1 / DSM 467 / LMG 4362 / NCIMB 8255 / S1).